Reading from the N-terminus, the 179-residue chain is Large ribosomal subunit protein uL5 (179 aa).

Belongs to the universal ribosomal protein uL5 family. In terms of assembly, part of the 50S ribosomal subunit; part of the 5S rRNA/L5/L18/L25 subcomplex. Contacts the 5S rRNA and the P site tRNA. Forms a bridge to the 30S subunit in the 70S ribosome.

This is one of the proteins that bind and probably mediate the attachment of the 5S RNA into the large ribosomal subunit, where it forms part of the central protuberance. In the 70S ribosome it contacts protein S13 of the 30S subunit (bridge B1b), connecting the 2 subunits; this bridge is implicated in subunit movement. Contacts the P site tRNA; the 5S rRNA and some of its associated proteins might help stabilize positioning of ribosome-bound tRNAs. The chain is Large ribosomal subunit protein uL5 from Halalkalibacterium halodurans (strain ATCC BAA-125 / DSM 18197 / FERM 7344 / JCM 9153 / C-125) (Bacillus halodurans).